The chain runs to 215 residues: Imidazole glycerol phosphate synthase subunit HisH (215 aa).

Positions 7–215 (TIAVIDYGMG…LLKNFVEWQP (209 aa)) constitute a Glutamine amidotransferase type-1 domain. C86 acts as the Nucleophile in catalysis. Active-site residues include H195 and E197.

As to quaternary structure, heterodimer of HisH and HisF.

It is found in the cytoplasm. The enzyme catalyses 5-[(5-phospho-1-deoxy-D-ribulos-1-ylimino)methylamino]-1-(5-phospho-beta-D-ribosyl)imidazole-4-carboxamide + L-glutamine = D-erythro-1-(imidazol-4-yl)glycerol 3-phosphate + 5-amino-1-(5-phospho-beta-D-ribosyl)imidazole-4-carboxamide + L-glutamate + H(+). It carries out the reaction L-glutamine + H2O = L-glutamate + NH4(+). The protein operates within amino-acid biosynthesis; L-histidine biosynthesis; L-histidine from 5-phospho-alpha-D-ribose 1-diphosphate: step 5/9. Its function is as follows. IGPS catalyzes the conversion of PRFAR and glutamine to IGP, AICAR and glutamate. The HisH subunit catalyzes the hydrolysis of glutamine to glutamate and ammonia as part of the synthesis of IGP and AICAR. The resulting ammonia molecule is channeled to the active site of HisF. This chain is Imidazole glycerol phosphate synthase subunit HisH, found in Dechloromonas aromatica (strain RCB).